A 438-amino-acid chain; its full sequence is 23S rRNA (uracil(1939)-C(5))-methyltransferase RlmD (438 aa).

In terms of domain architecture, TRAM spans 10–69; it reads KASVNTKHLSVDVVRLDHNGAGIAFVDKKPVFIEGALPGEKAIIQFIEQKKQFSRAKLIK. Residues Cys82, Cys88, Cys91, and Cys169 each coordinate [4Fe-4S] cluster. 6 residues coordinate S-adenosyl-L-methionine: Gln272, Phe301, Asn306, Glu322, Asn349, and Asp370. The active-site Nucleophile is the Cys396.

The protein belongs to the class I-like SAM-binding methyltransferase superfamily. RNA M5U methyltransferase family. RlmD subfamily.

The enzyme catalyses uridine(1939) in 23S rRNA + S-adenosyl-L-methionine = 5-methyluridine(1939) in 23S rRNA + S-adenosyl-L-homocysteine + H(+). Its function is as follows. Catalyzes the formation of 5-methyl-uridine at position 1939 (m5U1939) in 23S rRNA. The sequence is that of 23S rRNA (uracil(1939)-C(5))-methyltransferase RlmD from Aliivibrio fischeri (strain MJ11) (Vibrio fischeri).